The chain runs to 618 residues: Proline--tRNA ligase (618 aa).

This sequence belongs to the class-II aminoacyl-tRNA synthetase family. ProS type 1 subfamily. In terms of assembly, homodimer.

It is found in the cytoplasm. The enzyme catalyses tRNA(Pro) + L-proline + ATP = L-prolyl-tRNA(Pro) + AMP + diphosphate. Catalyzes the attachment of proline to tRNA(Pro) in a two-step reaction: proline is first activated by ATP to form Pro-AMP and then transferred to the acceptor end of tRNA(Pro). As ProRS can inadvertently accommodate and process non-cognate amino acids such as alanine and cysteine, to avoid such errors it has two additional distinct editing activities against alanine. One activity is designated as 'pretransfer' editing and involves the tRNA(Pro)-independent hydrolysis of activated Ala-AMP. The other activity is designated 'posttransfer' editing and involves deacylation of mischarged Ala-tRNA(Pro). The misacylated Cys-tRNA(Pro) is not edited by ProRS. This is Proline--tRNA ligase from Streptococcus pyogenes serotype M5 (strain Manfredo).